The sequence spans 233 residues: 5'-methylthioadenosine/S-adenosylhomocysteine nucleosidase (233 aa).

E12 functions as the Proton acceptor in the catalytic mechanism. Substrate is bound by residues G78, I156, and 177 to 178 (ME). D201 functions as the Proton donor in the catalytic mechanism.

Belongs to the PNP/UDP phosphorylase family. MtnN subfamily.

The catalysed reaction is S-adenosyl-L-homocysteine + H2O = S-(5-deoxy-D-ribos-5-yl)-L-homocysteine + adenine. It carries out the reaction S-methyl-5'-thioadenosine + H2O = 5-(methylsulfanyl)-D-ribose + adenine. It catalyses the reaction 5'-deoxyadenosine + H2O = 5-deoxy-D-ribose + adenine. It functions in the pathway amino-acid biosynthesis; L-methionine biosynthesis via salvage pathway; S-methyl-5-thio-alpha-D-ribose 1-phosphate from S-methyl-5'-thioadenosine (hydrolase route): step 1/2. Catalyzes the irreversible cleavage of the glycosidic bond in both 5'-methylthioadenosine (MTA) and S-adenosylhomocysteine (SAH/AdoHcy) to adenine and the corresponding thioribose, 5'-methylthioribose and S-ribosylhomocysteine, respectively. Also cleaves 5'-deoxyadenosine, a toxic by-product of radical S-adenosylmethionine (SAM) enzymes, into 5-deoxyribose and adenine. This chain is 5'-methylthioadenosine/S-adenosylhomocysteine nucleosidase, found in Listeria monocytogenes serotype 4a (strain HCC23).